The chain runs to 194 residues: Peptidyl-tRNA hydrolase (194 aa).

Tyrosine 17 serves as a coordination point for tRNA. Histidine 22 acts as the Proton acceptor in catalysis. The tRNA site is built by tyrosine 68, asparagine 70, and asparagine 116.

It belongs to the PTH family. As to quaternary structure, monomer.

The protein localises to the cytoplasm. The catalysed reaction is an N-acyl-L-alpha-aminoacyl-tRNA + H2O = an N-acyl-L-amino acid + a tRNA + H(+). Functionally, hydrolyzes ribosome-free peptidyl-tRNAs (with 1 or more amino acids incorporated), which drop off the ribosome during protein synthesis, or as a result of ribosome stalling. Catalyzes the release of premature peptidyl moieties from peptidyl-tRNA molecules trapped in stalled 50S ribosomal subunits, and thus maintains levels of free tRNAs and 50S ribosomes. The chain is Peptidyl-tRNA hydrolase from Chromohalobacter salexigens (strain ATCC BAA-138 / DSM 3043 / CIP 106854 / NCIMB 13768 / 1H11).